Reading from the N-terminus, the 180-residue chain is Succinate dehydrogenase cytochrome B subunit, mitochondrial (180 aa).

The Mitochondrial matrix segment spans residues 1–82; it reads MFATRSFCLS…WYLSSLHRIT (82 aa). The chain crosses the membrane as a helical span at residues 83–103; the sequence is GCVVAGTLYAFAMGYLVAPLA. Residues 104–122 lie on the Mitochondrial intermembrane side of the membrane; the sequence is GYSLDTATISGLIQQVPTW. Residues 123–143 traverse the membrane as a helical segment; it reads IKVPAKFVISYPLTFHIFNGI. Residue His-138 coordinates heme. Residues 144-159 lie on the Mitochondrial matrix side of the membrane; it reads RHLIWDTTKELSLKGV. A helical membrane pass occupies residues 160-180; the sequence is YRTGYAVLALSVLTSGYFAMI.

The protein belongs to the cytochrome b560 family. As to quaternary structure, forms part of complex II containing four subunits: a 70 kDa flavoprotein (FP), a 27 kDa iron-sulfur protein (IP), a cytochrome B and a membrane-anchoring protein. The cofactor is heme.

It is found in the mitochondrion inner membrane. Its pathway is carbohydrate metabolism; tricarboxylic acid cycle. Membrane-anchoring subunit of succinate dehydrogenase (SDH) that is involved in complex II of the mitochondrial electron transport chain and is responsible for transferring electrons from succinate to ubiquinone (coenzyme Q). The polypeptide is Succinate dehydrogenase cytochrome B subunit, mitochondrial (sdh3) (Schizosaccharomyces pombe (strain 972 / ATCC 24843) (Fission yeast)).